The following is a 143-amino-acid chain: MFMGEFRHSLDSKGRVIVPAKFRKGLGDNFVATRGLDNCIFVYPMNEWKVLEEKIRQLPLTKSDARAFSRFFLSGASECELDKQGRISLPSNLRDYAALQKDVVIIGVSNRVEIWSQEKWDNYQQQAESSFENIAEEIVDFDI.

SpoVT-AbrB domains are found at residues 5 to 47 (EFRH…PMNE) and 76 to 119 (ASEC…SQEK).

Belongs to the MraZ family. In terms of assembly, forms oligomers.

Its subcellular location is the cytoplasm. It localises to the nucleoid. The sequence is that of Transcriptional regulator MraZ from Natranaerobius thermophilus (strain ATCC BAA-1301 / DSM 18059 / JW/NM-WN-LF).